A 573-amino-acid chain; its full sequence is uncharacterized protein (573 aa).

Disordered regions lie at residues 1 to 33 (MLQQ…SIPR) and 60 to 101 (LVAN…SRYD). The span at 60–70 (LVANRSDNNGN) shows a compositional bias: polar residues. Residue Asn-63 is glycosylated (N-linked (GlcNAc...) asparagine). The segment covering 84–95 (SSSTSSLPSTRN) has biased composition (low complexity). A run of 10 repeats spans residues 102-103 (NM), 104-105 (NM), 106-107 (NM), 108-109 (NM), 110-111 (NM), 112-113 (NM), 114-115 (NM), 116-117 (NM), 118-119 (NM), and 120-121 (NM). The segment at 102 to 121 (NMNMNMNMNMNMNMNMNMNM) is 10 X 2 AA tandem repeats of N-M. Asn-123 carries N-linked (GlcNAc...) asparagine glycosylation. Disordered regions lie at residues 150 to 174 (IPEK…PRVR), 192 to 271 (QFPN…IRSN), 286 to 317 (KSSN…PITS), and 357 to 379 (NNRI…DKRT). A compositionally biased stretch (polar residues) spans 157-170 (SRYSLRSSPPTYSN). Low complexity predominate over residues 208 to 225 (LPPSSTFPDSPSSSSLPL). A compositionally biased stretch (polar residues) spans 226 to 252 (TQTGGPSSADNDSIATGTNNRSPQQTK). Residue Asn-236 is glycosylated (N-linked (GlcNAc...) asparagine). N-linked (GlcNAc...) asparagine glycosylation is found at Asn-437 and Asn-442. Low complexity-rich tracts occupy residues 441-457 (INSS…SSSS) and 466-483 (SISS…SKSK). A disordered region spans residues 441–483 (INSSISSPAPSSSSSSSLVSRGPMQSISSSPTPAPSSGSSKSK). Asn-498, Asn-535, and Asn-541 each carry an N-linked (GlcNAc...) asparagine glycan.

This sequence to yeast AFR1. Post-translationally, N-glycosylated.

This is an uncharacterized protein from Saccharomyces cerevisiae (strain ATCC 204508 / S288c) (Baker's yeast).